The chain runs to 368 residues: Membrane glycoprotein UL18 (368 aa).

The signal sequence occupies residues 1 to 19 (MMTMWCLTLFVLWMLRVVG). A helical transmembrane segment spans residues 326–346 (ISSVLLALLLCALLFAFLHYF).

As to quaternary structure, interacts with host LILRB1.

Its subcellular location is the host membrane. Its function is as follows. Plays a role in the protection against host NK cell cytotoxicity by interacting with and modulating the activity of the host inhibitory leukocyte Ig-like receptor 1/LILRB1, which is expressed on monocytes, dendritic cells, as well as subsets of T and NK cells. UL18 exerts an inhibitory effect on LIR-1+ NK cells, while it stimulates LIR-1- NK cell. The protein is Membrane glycoprotein UL18 (UL18) of Homo sapiens (Human).